The primary structure comprises 215 residues: Ion-translocating oxidoreductase complex subunit G (215 aa).

The helical transmembrane segment at 9–29 threads the bilayer; sequence GLILSLFAIITSGLIALTYFG. Threonine 176 carries the post-translational modification FMN phosphoryl threonine.

The protein belongs to the RnfG family. The complex is composed of six subunits: RnfA, RnfB, RnfC, RnfD, RnfE and RnfG. FMN serves as cofactor.

Its subcellular location is the cell inner membrane. Functionally, part of a membrane-bound complex that couples electron transfer with translocation of ions across the membrane. The polypeptide is Ion-translocating oxidoreductase complex subunit G (Pseudoalteromonas atlantica (strain T6c / ATCC BAA-1087)).